Reading from the N-terminus, the 120-residue chain is UPF0231 protein YacL (120 aa).

This sequence belongs to the UPF0231 family.

The polypeptide is UPF0231 protein YacL (yacL) (Shigella flexneri).